The sequence spans 428 residues: Autophagy-related protein 14 (428 aa).

A coiled-coil region spans residues 82 to 143; that stretch reads QEAIDRTAEI…RKKQLDKVKD (62 aa).

Belongs to the ATG14 family. Component of the autophagy-specific VPS34 PI3-kinase complex I.

It localises to the preautophagosomal structure membrane. The protein resides in the vacuole membrane. In terms of biological role, required for cytoplasm to vacuole transport (Cvt) and autophagy as a part of the autophagy-specific VPS34 PI3-kinase complex I. This complex is essential to recruit the ATG8-phosphatidylinositol conjugate and the ATG12-ATG5 conjugate to the pre-autophagosomal structure. ATG14 mediates the specific binding of the VPS34 PI3-kinase complex I to the preautophagosomal structure (PAS). Plays a crucial role in hyphal development, conidiogenesis and pathogenicity. Also required for glycogen mobilization, quantity of lipid bodies, and the turgor pressure of appressoria. The chain is Autophagy-related protein 14 from Pyricularia oryzae (strain 70-15 / ATCC MYA-4617 / FGSC 8958) (Rice blast fungus).